The following is a 396-amino-acid chain: Inhibitory POU protein (396 aa).

A POU-IV box motif is present at residues 86 to 95; that stretch reads RAEALAAVDI. Residues 222–299 form the POU-specific domain; it reads DTDTDPRELE…ILQAWLEEAE (78 aa). The segment at 302-328 is disordered; it reads AKNKRRDPDAPSVLPAGEKKRKRTSIA. Residues 320 to 377 constitute a DNA-binding region (homeobox; atypical); it reads KKRKRTSIAAPEKRSLEAYFAVQPRPSGEKIAAIAEKLDLKKNVVRVWFCNQRQKQKR.

The protein belongs to the POU transcription factor family. Class-4 subfamily. In terms of tissue distribution, coexpressed with vvl in overlapping subsets of neurons in the embryonic central nervous system. Expressed in olfactory neurons.

It is found in the nucleus. In terms of biological role, modulates gene transcription; simultaneously generates both a specific activator and an inhibitor of gene transcription, capable of modulating two distinct regulatory programs during neural development. Has a role in olfactory behavior. The sequence is that of Inhibitory POU protein (acj6) from Drosophila melanogaster (Fruit fly).